We begin with the raw amino-acid sequence, 488 residues long: GTPase Der (488 aa).

2 consecutive EngA-type G domains span residues 3–166 and 201–374; these read PVVA…VSDG and IKLA…QCAT. Residues 9–16, 56–60, 118–121, 207–214, 254–258, and 319–322 contribute to the GTP site; these read GRPNVGKS, DTGGI, NKTD, DTAGV, and NKWD. A KH-like domain is found at 375–459; that stretch reads KRVSTALLTR…PIRIQFNEGA (85 aa).

It belongs to the TRAFAC class TrmE-Era-EngA-EngB-Septin-like GTPase superfamily. EngA (Der) GTPase family. Associates with the 50S ribosomal subunit.

In terms of biological role, GTPase that plays an essential role in the late steps of ribosome biogenesis. In Sodalis glossinidius (strain morsitans), this protein is GTPase Der.